The chain runs to 349 residues: MGDLITIERHVLESQKDHPGATGEFTKLLYDVAFAAKLVYRHVVRAGLVDILGSAGSTNVQGEEVKKLDLFANEQFTKAIGHHGRFAVMASEENEDIILPPLDKYGKYVLLFDPLDGSSNIDANVSVGTIFSIFKRKSDAGGPGTLEDCLQKGAEQVASGYVIYGSSVMLVYTTGQGVHGFTLDPSIGEFLLSHENIKTPKRGKIYSMNEGYYRYFDDGIKKYIKYLQQEDKASKRPYSARYIGSCVADFHRNLLYGGIFIYPRTAKSPKGKLRLMYEANPLAFICEQAGGRASNGRERILDIKPTELHQRTPLFIGSEEDVKIAEEFEQGLRDIEHDEALCPKSLTSE.

Positions 92, 113, 115, and 116 each coordinate Mg(2+). Residues 116 to 119 (DGSS), Asn209, Tyr242, and Lys272 each bind substrate. Glu278 is a binding site for Mg(2+).

Belongs to the FBPase class 1 family. As to quaternary structure, homotetramer. The cofactor is Mg(2+).

The protein localises to the cytoplasm. It catalyses the reaction beta-D-fructose 1,6-bisphosphate + H2O = beta-D-fructose 6-phosphate + phosphate. Its pathway is carbohydrate biosynthesis; Calvin cycle. The protein is Fructose-1,6-bisphosphatase class 1 of Chloroherpeton thalassium (strain ATCC 35110 / GB-78).